The chain runs to 599 residues: Elongation factor 4 (599 aa).

The tr-type G domain maps to 4–186; it reads KFIRNFSIIA…AIIKHVPPPL (183 aa). Residues 16-21 and 133-136 contribute to the GTP site; these read DHGKST and NKID.

This sequence belongs to the TRAFAC class translation factor GTPase superfamily. Classic translation factor GTPase family. LepA subfamily.

Its subcellular location is the cell membrane. The enzyme catalyses GTP + H2O = GDP + phosphate + H(+). Functionally, required for accurate and efficient protein synthesis under certain stress conditions. May act as a fidelity factor of the translation reaction, by catalyzing a one-codon backward translocation of tRNAs on improperly translocated ribosomes. Back-translocation proceeds from a post-translocation (POST) complex to a pre-translocation (PRE) complex, thus giving elongation factor G a second chance to translocate the tRNAs correctly. Binds to ribosomes in a GTP-dependent manner. The protein is Elongation factor 4 of Ureaplasma parvum serovar 3 (strain ATCC 27815 / 27 / NCTC 11736).